We begin with the raw amino-acid sequence, 633 residues long: MAHLKRLVKLHIKRHYHRKFWKLGAVIFFFLVVLILMQREVSVQYSKEESKMERNLKNKNKMLDFMLEAVNNIKDAMPKMQIGAPIKENIDVRERPCLQGYYTAAELKPVFDRPPQDSNAPGASGKPFKITHLSPEEQKEKERGETKHCFNAFASDRISLHRDLGPDTRPPECIEQKFKRCPPLPTTSVIIVFHNEAWSTLLRTVHSVLYSSPAILLKEIILVDDASVDDYLHEKLEEYIKQFSIVKIVRQQERKGLITARLLGAAVATAETLTFLDAHCECFYGWLEPLLARIAENYTAVVSPDIASIDLNTFEFNKPSPYGSNHNRGNFDWSLSFGWESLPDHEKQRRKDETYPIKTPTFAGGLFSISKKYFEHIGSYDEEMEIWGGENIEMSFRVWQCGGQLEIMPCSVVGHVFRSKSPHTFPKGTQVIARNQVRLAEVWMDEYKEIFYRRNTDAAKIVKQKSFGDLSKRFEIKKRLQCKNFTWYLNTIYPEAYVPDLNPVISGYIKSVGQPLCLDVGENNQGGKPLILYTCHGLGGNQYFEYSAQREIRHNIQKELCLHATQGVVQLKACVYKGHRTIAPGEQIWEIRKDQLLYNPLFKMCLSSNGEHPNLVPCDATDLLQKWIFSQND.

Residues 1–19 are Cytoplasmic-facing; sequence MAHLKRLVKLHIKRHYHRK. Residues 20 to 37 traverse the membrane as a helical; Signal-anchor for type II membrane protein segment; it reads FWKLGAVIFFFLVVLILM. At 38–633 the chain is on the lumenal side; the sequence is QREVSVQYSK…LQKWIFSQND (596 aa). The disordered stretch occupies residues 112–145; the sequence is DRPPQDSNAPGASGKPFKITHLSPEEQKEKERGE. Over residues 134 to 145 the composition is skewed to basic and acidic residues; it reads SPEEQKEKERGE. The interval 184–293 is catalytic subdomain A; the sequence is LPTTSVIIVF…YGWLEPLLAR (110 aa). Residues Asp277 and His279 each contribute to the Mn(2+) site. The N-linked (GlcNAc...) asparagine glycan is linked to Asn297. A catalytic subdomain B region spans residues 356-418; sequence PIKTPTFAGG…PCSVVGHVFR (63 aa). Residue His415 participates in Mn(2+) binding. N-linked (GlcNAc...) asparagine glycosylation occurs at Asn484. Residues 504–630 enclose the Ricin B-type lectin domain; it reads VISGYIKSVG…TDLLQKWIFS (127 aa). A disulfide bond links Cys517 and Cys535. UDP-N-acetyl-alpha-D-galactosamine-binding residues include Asp519, Glu522, His536, and Asn541. 2 disulfides stabilise this stretch: Cys561/Cys574 and Cys605/Cys618.

This sequence belongs to the glycosyltransferase 2 family. GalNAc-T subfamily. Mn(2+) is required as a cofactor. In terms of tissue distribution, highly expressed in the reproductive tract, principally in the testis and uterus, and to a lesser degree in the cervix with only trace levels in the ovary. Also expressed at high level in sublingual gland, stomach and colon, with more moderate amounts present in the submandibular and parotid gland as well as the kidney.

It localises to the golgi apparatus. It is found in the golgi stack membrane. It catalyses the reaction L-seryl-[protein] + UDP-N-acetyl-alpha-D-galactosamine = a 3-O-[N-acetyl-alpha-D-galactosaminyl]-L-seryl-[protein] + UDP + H(+). It carries out the reaction L-threonyl-[protein] + UDP-N-acetyl-alpha-D-galactosamine = a 3-O-[N-acetyl-alpha-D-galactosaminyl]-L-threonyl-[protein] + UDP + H(+). It functions in the pathway protein modification; protein glycosylation. In terms of biological role, catalyzes the initial reaction in O-linked oligosaccharide biosynthesis, the transfer of an N-acetyl-D-galactosamine residue to a serine or threonine residue on the protein receptor. Has activity toward HIV envelope glycoprotein gp120. Has activity towards EA2, MUC2 and MUC5. Probably glycosylates fibronectin in vivo. Glycosylates FGF23. The polypeptide is Polypeptide N-acetylgalactosaminyltransferase 3 (Galnt3) (Mus musculus (Mouse)).